The primary structure comprises 248 residues: Cutinase cut1 (248 aa).

The first 17 residues, 1–17 (MRSLSLFTALLAGQAFA), serve as a signal peptide directing secretion. A disulfide bridge links Cys-79 with Cys-153. Residue Ser-164 is the Nucleophile of the active site. A disulfide bond links Cys-212 and Cys-219. Asp-216 is a catalytic residue. The active-site Proton donor/acceptor is the His-229.

The protein belongs to the cutinase family. The 2 disulfide bonds play a critical role in holding the catalytic residues in juxta-position; reduction of the disulfide bridges results in the complete inactivation of the enzyme.

Its subcellular location is the secreted. It carries out the reaction cutin + H2O = cutin monomers.. Catalyzes the hydrolysis of complex carboxylic polyesters found in the cell wall of plants. May degrade cutin, a macromolecule that forms the structure of the plant cuticle. May also degrade suberin, a specialized macromolecule found in the cell wall of various plant tissues. The protein is Cutinase cut1 of Trichoderma harzianum (Hypocrea lixii).